Reading from the N-terminus, the 252-residue chain is MGFLQDKVVIITGAAAGIGLATATAALDEGARVFGIDLAPAPTSLQENPNFEFLRADLTDHDCPKRAVQACIAAFGQRIDGLLNVAGIADNYGSADSVTDEVWDRCLAVNLAAPVKLMREVIPIMREAGKGSIVNTSSKAGLSGASSGVAYTASKHGLIGVTKNVAWRFKTEGIRCNAISVATEMGMTGDFSLWDQAAMEAMRPIHAAHMDMGIGATIKAEEVAQTLLFLVSDLSRRVNGAVIPVDDAWSTI.

The N-terminal stretch at 1 to 25 (MGFLQDKVVIITGAAAGIGLATATA) is a signal peptide. NADP(+) contacts are provided by Ile-11, Asp-57, and Arg-119. Ser-137 functions as the Proton donor in the catalytic mechanism. Residues Tyr-151 and Lys-155 each coordinate NADP(+). Tyr-151 (proton acceptor) is an active-site residue. The active-site Lowers pKa of active site Tyr is Lys-155.

Belongs to the short-chain dehydrogenases/reductases (SDR) family.

It functions in the pathway secondary metabolite biosynthesis; terpenoid biosynthesis. Short chain dehydrogenase; part of the gene cluster that mediates the biosynthesis of anditomin, a fungal meroterpenoid. The first step of the pathway is the synthesis of 3,5-dimethylorsellinic acid (DMOA) by the polyketide synthase andM. DMOA is then converted to the phthalide compound 5,7-dihydroxy-4,6-dimethylphthalide (DHDMP) by the cytochrome P450 monooxygenase andK, which is further prenylated by the prenyltransferase andD to yield farnesyl-DHDMP. Further epoxidation by the FAD-dependent monooxygenase andE leads to epoxyfarnesyl-DHDMP. The next step involves the terpene cyclase andB that converts epoxyfarnesyl-DHDMP into preandiloid A through opening of the epoxide ring followed by the cyclization of the farnesyl moiety. Preandiloid A is in turn oxidized at the C-3 hydroxyl group to yield preandiloid B by the dehydrogenase andC. The dioxygenase andA is solely responsible for the dehydrogenation of preandiloid B leading to the enone preandiloid C, as well as for the intriguing structural rearrangement to generate the bicyclo[2.2.2]octane core, transforming preandiloid C into andiconin. FAD-binding monooxygenase andJ then produces andilesin D which is reduced by dehydrogenase andI to yield andilesin A. Action of acetyltransferase andG followed by a spontaneous acetate elimination leads then to andilesin B, which is in turn substrate of the short chain dehydrogenase andH to yield andilesin C. Finally, the dioxygenase andF catalyzes the transformation of andilesin C to anditomin. The protein is Short chain dehydrogenase andC of Emericella variicolor (Aspergillus stellatus).